A 215-amino-acid polypeptide reads, in one-letter code: uncharacterized protein (215 aa).

Disordered regions lie at residues 1-144 and 156-215; these read MPKG…PYLR and IQGH…GAPA. Low complexity-rich tracts occupy residues 16 to 29, 49 to 58, 85 to 96, and 104 to 127; these read ASTPSRSSWPASPT, SSSWPKSPIK, SGSSSPGPSSSR, and STAASSRSPATSARSTSSCPRAAP.

This is an uncharacterized protein from Homo sapiens (Human).